The sequence spans 132 residues: uncharacterized protein (132 aa).

Residues 1 to 68 (MCSAGELLRG…HTGEPVGDDY (68 aa)) are disordered. Residues 100 to 120 (VIVIFFWVMLWFLGLQALGLV) traverse the membrane as a helical segment.

The protein belongs to the FAM241 family.

It localises to the membrane. This is an uncharacterized protein from Homo sapiens (Human).